The following is a 208-amino-acid chain: Ribosomal RNA small subunit methyltransferase G (208 aa).

S-adenosyl-L-methionine-binding positions include glycine 74, leucine 79, 125-126 (VE), and arginine 140.

The protein belongs to the methyltransferase superfamily. RNA methyltransferase RsmG family.

It is found in the cytoplasm. The catalysed reaction is guanosine(527) in 16S rRNA + S-adenosyl-L-methionine = N(7)-methylguanosine(527) in 16S rRNA + S-adenosyl-L-homocysteine. Specifically methylates the N7 position of guanine in position 527 of 16S rRNA. This chain is Ribosomal RNA small subunit methyltransferase G, found in Shewanella denitrificans (strain OS217 / ATCC BAA-1090 / DSM 15013).